The following is a 1610-amino-acid chain: Adenylate cyclase type 10 (1610 aa).

Guanylate cyclase domains are found at residues 42 to 179 (VLMF…RLAQ) and 293 to 418 (TIVF…ARMM). Residues aspartate 47 and isoleucine 48 each contribute to the Mg(2+) site. Residue 47–52 (DISGFT) participates in ATP binding. Lysine 95 contacts hydrogencarbonate. Residue aspartate 99 participates in Mg(2+) binding. Residues aspartate 99 and lysine 144 each coordinate ATP. The hydrogencarbonate site is built by valine 167, arginine 176, and methionine 337. ATP is bound by residues valine 406 and 412–416 (NLAAR).

Belongs to the adenylyl cyclase class-4/guanylyl cyclase family. It depends on Mg(2+) as a cofactor. Requires Mn(2+) as cofactor. Cleavage may occur to generate the active 48 kDa form. In terms of tissue distribution, detected in airway epithelial cells and testis (at protein level). Weakly expressed in multiple tissues. Expressed in brain, heart, kidney, liver, lung, pancreas, peripheral blood leukocytes, placenta, skeletal muscle, stomach, thymus, airway epithelial cells, duodenum, jejunum and ileum. Very low level of expression in bone.

It is found in the cell membrane. The protein localises to the cytoplasm. It localises to the cytoskeleton. Its subcellular location is the perinuclear region. The protein resides in the nucleus. It is found in the cell projection. The protein localises to the cilium. It localises to the mitochondrion. It carries out the reaction ATP = 3',5'-cyclic AMP + diphosphate. Activated by manganese or magnesium ions. In the presence of magnesium ions, the enzyme is activated by bicarbonate. In the presence of manganese ions, the enzyme is inhibited by bicarbonate. In the absence of magnesium and bicarbonate, the enzyme is weakly activated by calcium. Calcium mildly increases the enzyme activity, also in the presence of magnesium ions. Functionally, catalyzes the formation of the signaling molecule cAMP. May function as sensor that mediates responses to changes in cellular bicarbonate and CO(2) levels. Has a critical role in mammalian spermatogenesis by producing the cAMP which regulates cAMP-responsive nuclear factors indispensable for sperm maturation in the epididymis. Induces capacitation, the maturational process that sperm undergo prior to fertilization. Involved in ciliary beat regulation. This chain is Adenylate cyclase type 10 (ADCY10), found in Homo sapiens (Human).